The following is a 263-amino-acid chain: 4-hydroxy-2-oxo-heptane-1,7-dioate aldolase (263 aa).

The active-site Proton acceptor is the His45. Gln147 contacts substrate. Glu149 lines the a divalent metal cation pocket. Residues Ala174 and Asp175 each coordinate substrate. Asp175 contacts a divalent metal cation.

The protein belongs to the HpcH/HpaI aldolase family. As to quaternary structure, homohexamer; trimer of dimers. It depends on a divalent metal cation as a cofactor.

It carries out the reaction 4-hydroxy-2-oxoheptanedioate = succinate semialdehyde + pyruvate. The protein operates within aromatic compound metabolism; 4-hydroxyphenylacetate degradation; pyruvate and succinate semialdehyde from 4-hydroxyphenylacetate: step 7/7. In terms of biological role, catalyzes the reversible retro-aldol cleavage of 4-hydroxy-2-ketoheptane-1,7-dioate (HKHD) to pyruvate and succinic semialdehyde. The protein is 4-hydroxy-2-oxo-heptane-1,7-dioate aldolase of Salmonella arizonae (strain ATCC BAA-731 / CDC346-86 / RSK2980).